Consider the following 200-residue polypeptide: MALGGWRWARKALAAGRPLFQGRALLLTNTLGCGVLMAAGDGARQVWEVRARPGQRFSARRSASMFAVGCSMGPFLHFWYLWLDRLLPASGLRSLPSVMKKVLVDQTVASPILGVWYFLGLGSLEGQTLEESCQELRAKFWDFYKADWCVWPAAQLVNFLFIPSHFRVTYINGLTLGWDTYLSYLKYWVPEPLQTPGCAD.

Helical transmembrane passes span 24–40 (ALLLTNTLGCGVLMAAG), 63–83 (ASMFAVGCSMGPFLHFWYLWL), and 102–122 (VLVDQTVASPILGVWYFLGLG).

It belongs to the peroxisomal membrane protein PXMP2/4 family. Interacts with the large mitochondrial ribosomal subunit.

Its subcellular location is the membrane. It localises to the mitochondrion inner membrane. Its function is as follows. Required for the assembly and stability of the mitochondrial ribosome. Is a positive regulator of mitochondrial protein synthesis. The chain is Mpv17-like protein 2 (Mpv17l2) from Mus musculus (Mouse).